Consider the following 1193-residue polypeptide: Pyruvate carboxylase (1193 aa).

The region spanning 41–493 is the Biotin carboxylation domain; it reads QFQKILVANR…WTTFIDDTPE (453 aa). Lys-159, Glu-243, and His-278 together coordinate ATP. The ATP-grasp domain occupies 163 to 360; it reads RQLAIRCNVP…IVAAQIQIAA (198 aa). Residue Arg-335 is part of the active site. The 269-residue stretch at 579 to 847 folds into the Pyruvate carboxyltransferase domain; that stretch reads CLIMDTTWRD…DPGLNSAHVR (269 aa). Substrate-binding positions include 587 to 591 and Arg-660; that span reads RDAHQ. Asp-588 is an a divalent metal cation binding site. Lys-756, His-786, and His-788 together coordinate a divalent metal cation. N6-carboxylysine is present on Lys-756. A substrate-binding site is contributed by Thr-921. Residues 1116-1191 enclose the Biotinyl-binding domain; the sequence is KADVGDSSQV…DGQDLVCKIT (76 aa). Residue Lys-1157 is modified to N6-biotinyllysine.

The cofactor is biotin. It depends on Zn(2+) as a cofactor.

Its subcellular location is the cytoplasm. It carries out the reaction hydrogencarbonate + pyruvate + ATP = oxaloacetate + ADP + phosphate + H(+). Its pathway is carbohydrate biosynthesis; gluconeogenesis. Its function is as follows. Pyruvate carboxylase catalyzes a 2-step reaction, involving the ATP-dependent carboxylation of the covalently attached biotin in the first step and the transfer of the carboxyl group to pyruvate in the second. In Aspergillus terreus, this protein is Pyruvate carboxylase (pyc).